The primary structure comprises 231 residues: 2,3-bisphosphoglycerate-dependent phosphoglycerate mutase (231 aa).

Substrate contacts are provided by residues 10–17 (RHGQSEWN), 23–24 (TG), arginine 62, 89–92 (ERHY), lysine 100, 116–117 (RR), and 185–186 (GN). Histidine 11 acts as the Tele-phosphohistidine intermediate in catalysis. Glutamate 89 functions as the Proton donor/acceptor in the catalytic mechanism.

This sequence belongs to the phosphoglycerate mutase family. BPG-dependent PGAM subfamily. In terms of assembly, homodimer.

The enzyme catalyses (2R)-2-phosphoglycerate = (2R)-3-phosphoglycerate. It participates in carbohydrate degradation; glycolysis; pyruvate from D-glyceraldehyde 3-phosphate: step 3/5. Its function is as follows. Catalyzes the interconversion of 2-phosphoglycerate and 3-phosphoglycerate. This Buchnera aphidicola subsp. Acyrthosiphon pisum (strain 5A) protein is 2,3-bisphosphoglycerate-dependent phosphoglycerate mutase.